The primary structure comprises 205 residues: GTP cyclohydrolase-2 (205 aa).

Residue 49 to 53 coordinates GTP; the sequence is RLHSE. The Zn(2+) site is built by cysteine 54, cysteine 65, and cysteine 67. Residues glutamine 70, 92–94, and threonine 114 each bind GTP; that span reads EGR. Aspartate 126 (proton acceptor) is an active-site residue. Residue arginine 128 is the Nucleophile of the active site. GTP contacts are provided by threonine 149 and lysine 154.

This sequence belongs to the GTP cyclohydrolase II family. It depends on Zn(2+) as a cofactor.

It catalyses the reaction GTP + 4 H2O = 2,5-diamino-6-hydroxy-4-(5-phosphoribosylamino)-pyrimidine + formate + 2 phosphate + 3 H(+). The protein operates within cofactor biosynthesis; riboflavin biosynthesis; 5-amino-6-(D-ribitylamino)uracil from GTP: step 1/4. Catalyzes the conversion of GTP to 2,5-diamino-6-ribosylamino-4(3H)-pyrimidinone 5'-phosphate (DARP), formate and pyrophosphate. In Pseudomonas aeruginosa (strain UCBPP-PA14), this protein is GTP cyclohydrolase-2.